The chain runs to 1829 residues: Protein TIC 214 (1829 aa).

6 consecutive transmembrane segments (helical) span residues 18–38 (IINS…FSIG), 67–87 (FIAG…HLAL), 90–110 (PHTI…WNNP), 127–147 (LSIQ…HFLL), 174–194 (FVGW…VLVW), and 224–244 (IFSI…PSPI). Residues 260 to 272 (RDVEIEKTFERGG) show a composition bias toward basic and acidic residues. Positions 260 to 301 (RDVEIEKTFERGGTKQGQEVSAEEDPSPSLFSEEKEDPDKIE) are disordered.

This sequence belongs to the TIC214 family. As to quaternary structure, part of the Tic complex.

It is found in the plastid. The protein resides in the chloroplast inner membrane. In terms of biological role, involved in protein precursor import into chloroplasts. May be part of an intermediate translocation complex acting as a protein-conducting channel at the inner envelope. The polypeptide is Protein TIC 214 (Citrus sinensis (Sweet orange)).